The chain runs to 411 residues: Translation initiation factor 2 subunit gamma (411 aa).

Residues 9–201 (QPTVNIGMVG…AIEKYIPTPE (193 aa)) form the tr-type G domain. Positions 18–25 (GHVDHGKS) are G1. Mg(2+) is bound by residues Asp-21, Ser-25, Gly-46, and Ser-48. 21–26 (DHGKST) serves as a coordination point for GTP. Residues 46–50 (GISIK) form a G2 region. Residues 88-91 (DAPG) form a G3 region. Residues 144–147 (NKID) and 179–181 (SAY) contribute to the GTP site. The interval 144–147 (NKID) is G4. The segment at 179-181 (SAY) is G5.

Belongs to the TRAFAC class translation factor GTPase superfamily. Classic translation factor GTPase family. EIF2G subfamily. Heterotrimer composed of an alpha, a beta and a gamma chain. Mg(2+) serves as cofactor.

The catalysed reaction is GTP + H2O = GDP + phosphate + H(+). Functionally, eIF-2 functions in the early steps of protein synthesis by forming a ternary complex with GTP and initiator tRNA. The chain is Translation initiation factor 2 subunit gamma from Thermoplasma volcanium (strain ATCC 51530 / DSM 4299 / JCM 9571 / NBRC 15438 / GSS1).